We begin with the raw amino-acid sequence, 467 residues long: Neutrophil collagenase (467 aa).

The signal sequence occupies residues 1–20; the sequence is MFSLKTLPFLLLLHVQISKA. Residues 21-100 constitute a propeptide, activation peptide; sequence FPVSSKEKNT…CGVPDSGGFM (80 aa). N-linked (GlcNAc...) asparagine glycans are attached at residues N54 and N73. The short motif at 89–96 is the Cysteine switch element; sequence PRCGVPDS. C91 contacts Zn(2+). N112 is a glycosylation site (N-linked (GlcNAc...) asparagine). D157 serves as a coordination point for Ca(2+). Zn(2+) is bound by residues H167 and D169. Ca(2+) is bound by residues D174, G175, N177, and I179. Residue H182 participates in Zn(2+) binding. Ca(2+)-binding residues include G189, G191, and D193. H195 is a binding site for Zn(2+). Ca(2+) contacts are provided by D197 and E200. N-linked (GlcNAc...) asparagine glycosylation occurs at N204. H217 is a Zn(2+) binding site. Residue E218 is part of the active site. Zn(2+) is bound by residues H221 and H227. The N-linked (GlcNAc...) asparagine glycan is linked to N246. Hemopexin repeat units follow at residues 276-325, 326-372, 374-420, and 421-464; these read PKPC…WPSL, PTGI…GFPS, VQAI…FPGI, and ESKV…WLNC. C279 and C464 are oxidised to a cystine. D286 contributes to the Ca(2+) binding site. Residues D378 and D425 each coordinate Ca(2+).

The protein belongs to the peptidase M10A family. It depends on Ca(2+) as a cofactor. Requires Zn(2+) as cofactor. In terms of tissue distribution, neutrophils.

It localises to the cytoplasmic granule. It is found in the secreted. Its subcellular location is the extracellular space. The protein localises to the extracellular matrix. It carries out the reaction Cleavage of interstitial collagens in the triple helical domain. Unlike EC 3.4.24.7, this enzyme cleaves type III collagen more slowly than type I.. Its activity is regulated as follows. Cannot be activated without removal of the activation peptide. Its function is as follows. Can degrade fibrillar type I, II, and III collagens. The sequence is that of Neutrophil collagenase (MMP8) from Homo sapiens (Human).